Consider the following 340-residue polypeptide: Uroporphyrinogen decarboxylase (340 aa).

Substrate-binding positions include 21-25 (RQAGR), D71, Y147, S202, and H316.

This sequence belongs to the uroporphyrinogen decarboxylase family. Homodimer.

It localises to the cytoplasm. It carries out the reaction uroporphyrinogen III + 4 H(+) = coproporphyrinogen III + 4 CO2. It functions in the pathway porphyrin-containing compound metabolism; protoporphyrin-IX biosynthesis; coproporphyrinogen-III from 5-aminolevulinate: step 4/4. Catalyzes the decarboxylation of four acetate groups of uroporphyrinogen-III to yield coproporphyrinogen-III. The chain is Uroporphyrinogen decarboxylase from Nitratiruptor sp. (strain SB155-2).